The sequence spans 267 residues: 5'-nucleotidase SurE (267 aa).

The a divalent metal cation site is built by D9, D10, S40, and N97.

Belongs to the SurE nucleotidase family. A divalent metal cation serves as cofactor.

It is found in the cytoplasm. The enzyme catalyses a ribonucleoside 5'-phosphate + H2O = a ribonucleoside + phosphate. Its function is as follows. Nucleotidase that shows phosphatase activity on nucleoside 5'-monophosphates. In Helicobacter pylori (strain Shi470), this protein is 5'-nucleotidase SurE.